Consider the following 197-residue polypeptide: MSLGRLCRLLMPALLCGALAAPGLAGTMCASRDDWRCAGSMHEFSAKVLDGHTVNLDKYRGFVCIVTNVASQUGKTEVNYTQLVDLHARYAECGLRFLAFPCNQFGKQEPGSNEEIKEFAAGYNVKFDMFSKICVNGDDAHPLWKWMKIQPKGKGILGNAIKWNFTKFLFDKNGCVVKRYGPMEEPLVLEKDLPHYF.

A Phosphoserine modification is found at S40. U73 is an active-site residue. Residue U73 is a non-standard amino acid, selenocysteine.

The protein belongs to the glutathione peroxidase family. As to quaternary structure, monomer. Has a tendency to form higher mass oligomers. Interacts with FUNDC1; this interaction promotes GPX4 recruitment into mitochondria through TOM/TIM complex where it is degraded by mitophagy.

The protein resides in the mitochondrion. It is found in the cytoplasm. The enzyme catalyses a hydroperoxy polyunsaturated fatty acid + 2 glutathione = a hydroxy polyunsaturated fatty acid + glutathione disulfide + H2O. It catalyses the reaction 2 glutathione + H2O2 = glutathione disulfide + 2 H2O. It carries out the reaction tert-butyl hydroperoxide + 2 glutathione = tert-butanol + glutathione disulfide + H2O. The catalysed reaction is cumene hydroperoxide + 2 glutathione = 2-phenylpropan-2-ol + glutathione disulfide + H2O. The enzyme catalyses (9S)-hydroperoxy-(10E,12Z)-octadecadienoate + 2 glutathione = (9S)-hydroxy-(10E,12Z)-octadecadienoate + glutathione disulfide + H2O. It catalyses the reaction (13S)-hydroperoxy-(9Z,11E)-octadecadienoate + 2 glutathione = (13S)-hydroxy-(9Z,11E)-octadecadienoate + glutathione disulfide + H2O. It carries out the reaction (5S)-hydroperoxy-(6E,8Z,11Z,14Z)-eicosatetraenoate + 2 glutathione = (5S)-hydroxy-(6E,8Z,11Z,14Z)-eicosatetraenoate + glutathione disulfide + H2O. The catalysed reaction is (12R)-hydroperoxy-(5Z,8Z,10E,14Z)-eicosatetraenoate + 2 glutathione = (12R)-hydroxy-(5Z,8Z,10E,14Z)-eicosatetraenoate + glutathione disulfide + H2O. The enzyme catalyses (12S)-hydroperoxy-(5Z,8Z,10E,14Z)-eicosatetraenoate + 2 glutathione = (12S)-hydroxy-(5Z,8Z,10E,14Z)-eicosatetraenoate + glutathione disulfide + H2O. It catalyses the reaction (15S)-hydroperoxy-(5Z,8Z,11Z,13E)-eicosatetraenoate + 2 glutathione = (15S)-hydroxy-(5Z,8Z,11Z,13E)-eicosatetraenoate + glutathione disulfide + H2O. It carries out the reaction (5S)-hydroperoxy-(6E,8Z,11Z,14Z,17Z)-eicosapentaenoate + 2 glutathione = (5S)-hydroxy-(6E,8Z,11Z,14Z,17Z)-eicosapentaenoate + glutathione disulfide + H2O. The catalysed reaction is (12S)-hydroperoxy-(5Z,8Z,10E,14Z,17Z)-eicosapentaenoate + 2 glutathione = (12S)-hydroxy-(5Z,8Z,10E,14Z,17Z)-eicosapentaenoate + glutathione disulfide + H2O. The enzyme catalyses (15S)-hydroperoxy-(5Z,8Z,11Z,13E,17Z)-eicosapentaenoate + 2 glutathione = (15S)-hydroxy-(5Z,8Z,11Z,13E,17Z)-eicosapentaenoate + glutathione disulfide + H2O. It catalyses the reaction (15S)-hydroperoxy-(11Z,13E)-eicosadienoate + 2 glutathione = (15S)-hydroxy-(11Z,13E)-eicosadienoate + glutathione disulfide + H2O. It carries out the reaction (17S)-hydroperoxy-(4Z,7Z,10Z,13Z,15E,19Z)-docosahexaenoate + 2 glutathione = (17S)-hydroxy-(4Z,7Z,10Z,13Z,15E,19Z)-docosahexaenoate + glutathione disulfide + H2O. The catalysed reaction is a hydroperoxy-1,2-diacyl-glycero-3-phosphocholine + 2 glutathione = a hydroxy-1,2-diacyl-glycero-3-phosphocholine + glutathione disulfide + H2O. Its function is as follows. Essential antioxidant peroxidase that directly reduces phospholipid hydroperoxide even if they are incorporated in membranes and lipoproteins. Can also reduce fatty acid hydroperoxide, cholesterol hydroperoxide and thymine hydroperoxide. Plays a key role in protecting cells from oxidative damage by preventing membrane lipid peroxidation. Required to prevent cells from ferroptosis, a non-apoptotic cell death resulting from an iron-dependent accumulation of lipid reactive oxygen species. The presence of selenocysteine (Sec) versus Cys at the active site is essential for life: it provides resistance to overoxidation and prevents cells against ferroptosis. The presence of Sec at the active site is also essential for the survival of a specific type of parvalbumin-positive interneurons, thereby preventing against fatal epileptic seizures. May be required to protect cells from the toxicity of ingested lipid hydroperoxides. Required for normal sperm development and male fertility. Essential for maturation and survival of photoreceptor cells. Plays a role in a primary T-cell response to viral and parasitic infection by protecting T-cells from ferroptosis and by supporting T-cell expansion. Plays a role of glutathione peroxidase in platelets in the arachidonic acid metabolism. Reduces hydroperoxy ester lipids formed by a 15-lipoxygenase that may play a role as down-regulator of the cellular 15-lipoxygenase pathway. Can also reduce small soluble hydroperoxides such as H2O2, cumene hydroperoxide and tert-butyl hydroperoxide. The sequence is that of Phospholipid hydroperoxide glutathione peroxidase from Hylobates lar (Lar gibbon).